The primary structure comprises 121 residues: Piercer of microtubule wall 2 protein (121 aa).

Residues 1–10 (MTDRNRDKKS) are compositionally biased toward basic and acidic residues. The disordered stretch occupies residues 1–29 (MTDRNRDKKSTSPSNSDTEMKSEQLPPCV).

The protein belongs to the PIERCE2 family. Microtubule inner protein component of sperm flagellar doublet microtubules. Interacts with CFAP53, ODAD1 and ODAD3; the interactions link the outer dynein arms docking complex (ODA-DC) to the internal microtubule inner proteins (MIP) in cilium axoneme. As to expression, expressed in airway epithelial cells.

The protein localises to the cytoplasm. Its subcellular location is the cytoskeleton. The protein resides in the cilium axoneme. It is found in the flagellum axoneme. Microtubule inner protein involved in the attachment of outer dynein arms (ODAs) to dynein-decorated doublet microtubules (DMTs) in cilia axoneme, which is required for motile cilia beating. This Homo sapiens (Human) protein is Piercer of microtubule wall 2 protein.